The following is a 444-amino-acid chain: ATP-dependent protease ATPase subunit HslU (444 aa).

ATP contacts are provided by residues Ile20 and 62 to 67 (GVGKTE). Positions 137-162 (LVPPSRGTSGEPERGEDSNARQTFRK) are disordered. 3 residues coordinate ATP: Asp257, Glu322, and Arg394.

Belongs to the ClpX chaperone family. HslU subfamily. In terms of assembly, a double ring-shaped homohexamer of HslV is capped on each side by a ring-shaped HslU homohexamer. The assembly of the HslU/HslV complex is dependent on binding of ATP.

Its subcellular location is the cytoplasm. In terms of biological role, ATPase subunit of a proteasome-like degradation complex; this subunit has chaperone activity. The binding of ATP and its subsequent hydrolysis by HslU are essential for unfolding of protein substrates subsequently hydrolyzed by HslV. HslU recognizes the N-terminal part of its protein substrates and unfolds these before they are guided to HslV for hydrolysis. This Bordetella petrii (strain ATCC BAA-461 / DSM 12804 / CCUG 43448) protein is ATP-dependent protease ATPase subunit HslU.